We begin with the raw amino-acid sequence, 196 residues long: MSSKEQKTPEGQAPEEIITEQHDDVEAVEPEVSAEQVDPRDEKIANLEAQLAEAQKREREVMLRAKADEDNLRRRTEQDIEKAHKFALEKFVNELLPVIDSLDRALEVADKANPDLAPMVEGIELTLKSMLDVVRKFGVEVIADTNVPLDPNVHQAIAMVESEDVAAGNVLAVMQKGYTLNGRTIRAAMVTVAKAK.

The interval 1–41 is disordered; the sequence is MSSKEQKTPEGQAPEEIITEQHDDVEAVEPEVSAEQVDPRD.

This sequence belongs to the GrpE family. Homodimer.

The protein resides in the cytoplasm. Participates actively in the response to hyperosmotic and heat shock by preventing the aggregation of stress-denatured proteins, in association with DnaK and GrpE. It is the nucleotide exchange factor for DnaK and may function as a thermosensor. Unfolded proteins bind initially to DnaJ; upon interaction with the DnaJ-bound protein, DnaK hydrolyzes its bound ATP, resulting in the formation of a stable complex. GrpE releases ADP from DnaK; ATP binding to DnaK triggers the release of the substrate protein, thus completing the reaction cycle. Several rounds of ATP-dependent interactions between DnaJ, DnaK and GrpE are required for fully efficient folding. The protein is Protein GrpE of Klebsiella pneumoniae (strain 342).